The chain runs to 344 residues: Oxygen sensor histidine kinase NreB (344 aa).

Positions 58, 61, 73, and 76 each coordinate [4Fe-4S] cluster. Residues E147–V344 form the Histidine kinase domain. Position 158 is a phosphohistidine; by autocatalysis (H158).

[4Fe-4S] cluster is required as a cofactor. In terms of processing, autophosphorylated.

The protein resides in the cytoplasm. The enzyme catalyses ATP + protein L-histidine = ADP + protein N-phospho-L-histidine.. Member of the two-component regulatory system NreB/NreC involved in the control of dissimilatory nitrate/nitrite reduction in response to oxygen. NreB functions as a direct oxygen sensor histidine kinase which is autophosphorylated, in the absence of oxygen, probably at the conserved histidine residue, and transfers its phosphate group probably to a conserved aspartate residue of NreC. NreB/NreC activates the expression of the nitrate (narGHJI) and nitrite (nir) reductase operons, as well as the putative nitrate transporter gene narT. In Staphylococcus haemolyticus (strain JCSC1435), this protein is Oxygen sensor histidine kinase NreB (nreB).